Here is a 295-residue protein sequence, read N- to C-terminus: Putative fused nickel transport protein NikMN (295 aa).

The next 8 helical transmembrane spans lie at 8 to 28, 39 to 59, 70 to 90, 98 to 118, 135 to 155, 175 to 195, 211 to 231, and 268 to 288; these read LDLS…GYSI, LFGI…PIPG, LAGI…VLTI, GGIT…VFVG, FIAG…EIGI, ALLG…IAAA, LAVI…AELV, and AGTL…GFAL.

Belongs to the CbiM family. NikM subfamily.

The protein localises to the cell membrane. May be involved in nickel transport. The protein is Putative fused nickel transport protein NikMN of Archaeoglobus fulgidus (strain ATCC 49558 / DSM 4304 / JCM 9628 / NBRC 100126 / VC-16).